The primary structure comprises 1005 residues: Retinoblastoma-related protein (1005 aa).

A domain A region spans residues 404–605 (TPVSTAMTTA…EKGSSMYNSL (202 aa)). The interval 404 to 853 (TPVSTAMTTA…NEIFIPSVKP (450 aa)) is pocket. The segment at 606 to 722 (TIARPNLSNE…HPTRGETCAE (117 aa)) is spacer. The tract at residues 723 to 853 (TAVNLFFSKI…NEIFIPSVKP (131 aa)) is domain B. A compositionally biased stretch (polar residues) spans 863-873 (VPKNPNNQVSE). Residues 863–899 (VPKNPNNQVSETNKKDESGPCPCPGSPKVSSFPSLPD) are disordered.

It belongs to the retinoblastoma protein (RB) family.

The protein localises to the nucleus. In terms of biological role, regulator of biological processes that recruits a histone deacetylase to control gene transcription. May play a role in the entry into mitosis, negatively regulating the cell proliferation. Formation of stable complexes with geminiviridae replication-associated proteins may create a cellular environment which favors viral DNA replication. The chain is Retinoblastoma-related protein (RBR) from Pilosella piloselloides (Glaucous king-devil hawkweed).